We begin with the raw amino-acid sequence, 348 residues long: Phospho-2-dehydro-3-deoxyheptonate aldolase, Trp-sensitive (348 aa).

It belongs to the class-I DAHP synthase family.

It carries out the reaction D-erythrose 4-phosphate + phosphoenolpyruvate + H2O = 7-phospho-2-dehydro-3-deoxy-D-arabino-heptonate + phosphate. It functions in the pathway metabolic intermediate biosynthesis; chorismate biosynthesis; chorismate from D-erythrose 4-phosphate and phosphoenolpyruvate: step 1/7. Stereospecific condensation of phosphoenolpyruvate (PEP) and D-erythrose-4-phosphate (E4P) giving rise to 3-deoxy-D-arabino-heptulosonate-7-phosphate (DAHP). This is Phospho-2-dehydro-3-deoxyheptonate aldolase, Trp-sensitive (aroH) from Salmonella typhi.